Here is a 260-residue protein sequence, read N- to C-terminus: DNA repair protein RecO (260 aa).

The protein belongs to the RecO family.

In terms of biological role, involved in DNA repair and RecF pathway recombination. The sequence is that of DNA repair protein RecO from Paracidovorax citrulli (strain AAC00-1) (Acidovorax citrulli).